Here is a 184-residue protein sequence, read N- to C-terminus: Large ribosomal subunit protein eL18 (184 aa).

The protein belongs to the eukaryotic ribosomal protein eL18 family.

It is found in the cytoplasm. The protein is Large ribosomal subunit protein eL18 (RPL18) of Theileria parva (East coast fever infection agent).